The primary structure comprises 209 residues: Large ribosomal subunit protein uL4 (209 aa).

A disordered region spans residues 44-77; that stretch reads QRQGTHKSKERSEVSGSTRKLIRQKGGGGARRGD.

This sequence belongs to the universal ribosomal protein uL4 family. In terms of assembly, part of the 50S ribosomal subunit.

One of the primary rRNA binding proteins, this protein initially binds near the 5'-end of the 23S rRNA. It is important during the early stages of 50S assembly. It makes multiple contacts with different domains of the 23S rRNA in the assembled 50S subunit and ribosome. Functionally, forms part of the polypeptide exit tunnel. The sequence is that of Large ribosomal subunit protein uL4 from Parabacteroides distasonis (strain ATCC 8503 / DSM 20701 / CIP 104284 / JCM 5825 / NCTC 11152).